The chain runs to 169 residues: Der GTPase-activating protein YihI (169 aa).

Disordered regions lie at residues 1 to 98 (MKPS…PQAE) and 144 to 169 (GLSYDDDEEEEEDEKQEDMMRLLRGN). Residues 10–19 (SKGHAKARRK) are compositionally biased toward basic residues. A compositionally biased stretch (basic and acidic residues) spans 20–30 (TREELDQEARD). Residues 31 to 40 (RKRLKKRRGH) are compositionally biased toward basic residues. Positions 49-58 (GNTTSGSKGQ) are enriched in polar residues. The segment covering 147–159 (YDDDEEEEEDEKQ) has biased composition (acidic residues). Basic and acidic residues predominate over residues 160 to 169 (EDMMRLLRGN).

This sequence belongs to the YihI family. Interacts with Der.

In terms of biological role, a GTPase-activating protein (GAP) that modifies Der/EngA GTPase function. May play a role in ribosome biogenesis. The protein is Der GTPase-activating protein YihI of Escherichia coli O6:K15:H31 (strain 536 / UPEC).